The sequence spans 1712 residues: Neurexin-2 (1712 aa).

A signal peptide spans 1 to 28 (MASGSRWRPTPPPLLLLLLLALAARADG). The Laminin G-like 1 domain occupies 29–206 (LEFGGGPGQW…LRGATADPLC (178 aa)). The Extracellular segment spans residues 29 to 1636 (LEFGGGPGQW…EVIRESSSTT (1608 aa)). Asn-60 carries N-linked (GlcNAc...) asparagine glycosylation. In terms of domain architecture, EGF-like 1 spans 202–242 (ADPLCAPARNPCANGGLCTVLAPGEVGCDCSHTGFGGKFCS). Cystine bridges form between Cys-206–Cys-219, Cys-213–Cys-229, and Cys-231–Cys-241. 2 consecutive Laminin G-like domains span residues 289–486 (VATF…SFRC) and 493–686 (DPVT…APFC). A Ca(2+)-binding site is contributed by Asp-335. The N-linked (GlcNAc...) asparagine glycan is linked to Asn-338. Leu-352 and Met-420 together coordinate Ca(2+). 5 disulfide bridges follow: Cys-450–Cys-486, Cys-657–Cys-686, Cys-694–Cys-705, Cys-699–Cys-714, and Cys-716–Cys-726. The EGF-like 2 domain occupies 690–727 (TLKQCASAPCRNGGVCREGWNRFICDCIGTGFLGRVCE). Laminin G-like domains lie at 732-904 (VLSY…ITYC) and 918-1093 (DPVT…ERGC). Residues Asp-779 and Leu-796 each contribute to the Ca(2+) site. N-linked (GlcNAc...) asparagine glycosylation is present at Asn-841. Residue Arg-854 participates in Ca(2+) binding. 4 disulfides stabilise this stretch: Cys-1065–Cys-1093, Cys-1100–Cys-1111, Cys-1105–Cys-1120, and Cys-1122–Cys-1132. The EGF-like 3 domain occupies 1096–1133 (PSTTCTEESCANQGVCLQQWDGFTCDCTMTSYGGPVCN). Positions 1137–1345 (TTYIFGKGGA…HLRLVGEGPS (209 aa)) constitute a Laminin G-like 6 domain. Positions 1189 and 1206 each coordinate Ca(2+). N-linked (GlcNAc...) asparagine glycosylation is present at Asn-1236. The Ca(2+) site is built by Ile-1288 and Asn-1290. The segment at 1373–1392 (ATTTTRRGRSPTLRDSTTQN) is disordered. O-linked (Xyl...) (heparan sulfate) serine glycosylation is present at Ser-1400. Disordered stretches follow at residues 1458–1489 (ATQD…CEEP) and 1525–1626 (TLLS…PGAV). Residues 1637–1657 (GMVVGIVAAAALCILILLYAM) traverse the membrane as a helical segment. The Cytoplasmic segment spans residues 1658–1712 (YKYRNRDEGSYQVDQSRNYISNSAQSNGAVVKEKAPAAPKTPSKAKKNKDKEYYV). The segment at 1679–1712 (NSAQSNGAVVKEKAPAAPKTPSKAKKNKDKEYYV) is disordered.

Belongs to the neurexin family. In terms of assembly, the laminin G-like domain 1 binds to NXPH1. Interacts with PATJ. Interacts with CBLN1, CBLN2 and, less avidly, with CBLN4. Specific isoforms bind neuroligins NLGN1, NLGN2 and NLGN3. Specific isoforms bind to alpha-dystroglycan. Interacts (via Laminin G-like 1 domain) with IGSF21 (Ig-like 1 domain) in a trans-interaction manner. Interacts with CLSTN3. In terms of processing, O-glycosylated; contains heparan sulfate. Heparan sulfate attachment is required for synapse development by mediating interactions with neuroligins. In terms of tissue distribution, predominantly expressed in brain.

The protein resides in the presynaptic cell membrane. Neuronal cell surface protein that may be involved in cell recognition and cell adhesion. May mediate intracellular signaling. The chain is Neurexin-2 (NRXN2) from Homo sapiens (Human).